The primary structure comprises 105 residues: Zinc metalloproteinase/disintegrin (105 aa).

A Peptidase M12B domain is found at 1 to 3; sequence DEP. The region spanning 11–96 is the Disintegrin domain; sequence PPVCGNYFVE…AECTDRFQRN (86 aa). 6 disulfide bridges follow: C25–C43, C27–C38, C37–C60, C51–C57, C56–C82, and C69–C89. Residues 75–77 carry the D/ECD-tripeptide motif; that stretch reads ECD. Positions 99-105 are excised as a propeptide; that stretch reads PCQNNNG.

The protein belongs to the venom metalloproteinase (M12B) family. P-III subfamily. As to quaternary structure, monomer. It depends on Zn(2+) as a cofactor. In terms of tissue distribution, expressed by the venom gland.

Its subcellular location is the secreted. Its function is as follows. Impairs hemostasis in the envenomed animal. Functionally, inhibits platelet aggregation induced by ADP, thrombin, platelet-activating factor and collagen. Acts by inhibiting fibrinogen interaction with platelet receptors GPIIb/GPIIIa (ITGA2B/ITGB3). The protein is Zinc metalloproteinase/disintegrin of Gloydius brevicauda (Korean slamosa snake).